A 39-amino-acid polypeptide reads, in one-letter code: Basic phospholipase A2 (39 aa).

Ca(2+) is bound by residues Y27, G29, and G31.

This sequence belongs to the phospholipase A2 family. Group II subfamily. D49 sub-subfamily. It depends on Ca(2+) as a cofactor. In terms of tissue distribution, expressed by the venom gland.

The protein localises to the secreted. It catalyses the reaction a 1,2-diacyl-sn-glycero-3-phosphocholine + H2O = a 1-acyl-sn-glycero-3-phosphocholine + a fatty acid + H(+). Is selectively inhibited by the gamma-phospholipase A2 inhibitor (PLI) CgMIP-I (AC P0DQP7) but not by the alpha-PLI CgMIP-II (AC P0DQP8). In terms of biological role, snake venom phospholipase A2 (PLA2) that shows high myotoxic activities, induces mild edema, and shows cytolytic, and anti-coagulant activities, as well as intracerebral lethal effect. Does not induce lethality at a dose of 5 ug/g, when intravenously injected into mice. PLA2 catalyzes the calcium-dependent hydrolysis of the 2-acyl groups in 3-sn-phosphoglycerides. The sequence is that of Basic phospholipase A2 from Cerrophidion godmani (Porthidium godmani).